The primary structure comprises 206 residues: Small ribosomal subunit protein uS4c (206 aa).

The region spanning 94 to 152 is the S4 RNA-binding domain; sequence MRLDNIVFRLGMAPTIPAARQLVNHRHILVNDFTVNIPSYSCKLGDKISVQKRFESKTN.

The protein belongs to the universal ribosomal protein uS4 family. As to quaternary structure, part of the 30S ribosomal subunit. Contacts protein S5. The interaction surface between S4 and S5 is involved in control of translational fidelity.

The protein localises to the plastid. The protein resides in the chloroplast. Functionally, one of the primary rRNA binding proteins, it binds directly to 16S rRNA where it nucleates assembly of the body of the 30S subunit. Its function is as follows. With S5 and S12 plays an important role in translational accuracy. This chain is Small ribosomal subunit protein uS4c (rps4), found in Chara vulgaris (Common stonewort).